Consider the following 188-residue polypeptide: dCTP deaminase (188 aa).

DCTP-binding positions include 111–116 (KSTYAR), 135–137 (TLE), Gln-156, Tyr-170, and Gln-180. Glu-137 (proton donor/acceptor) is an active-site residue.

This sequence belongs to the dCTP deaminase family. Homotrimer.

It carries out the reaction dCTP + H2O + H(+) = dUTP + NH4(+). Its pathway is pyrimidine metabolism; dUMP biosynthesis; dUMP from dCTP (dUTP route): step 1/2. Functionally, catalyzes the deamination of dCTP to dUTP. This Pseudomonas syringae pv. tomato (strain ATCC BAA-871 / DC3000) protein is dCTP deaminase.